A 264-amino-acid polypeptide reads, in one-letter code: Ribonuclease HII (264 aa).

One can recognise an RNase H type-2 domain in the interval 33 to 224 (GPVAGVDEVG…VRRVASGSNT (192 aa)). A divalent metal cation is bound by residues D39, E40, and D133. Residues 222-264 (SNTAEVADGQPDPRDGTAQTGEGRWSKSSHPATMRATGRAQGT) are disordered.

It belongs to the RNase HII family. Requires Mn(2+) as cofactor. The cofactor is Mg(2+).

It is found in the cytoplasm. The enzyme catalyses Endonucleolytic cleavage to 5'-phosphomonoester.. In terms of biological role, endonuclease that specifically degrades the RNA of RNA-DNA hybrids. The sequence is that of Ribonuclease HII from Mycobacterium bovis (strain BCG / Pasteur 1173P2).